A 2488-amino-acid chain; its full sequence is MPAILVASKMKSGLPKPVHSAAPILHVPPARAGPQPCYLKLGSKVEVSKTTYPSQIPLKSQVLQGLQEPAGEGLPLRKSGSVENGFDTQIYTDWANHYLAKSGHKRLIRDLQQDVTDGVLLAQIIQVVANEKIEDINGCPKNRSQMIENIDACLNFLAAKGINIQGLSAEEIRNGNLKAILGLFFSLSRYKQQQQQPQKQHLSSPLPPAVSQVAGAPSQCQAGTPQQQVPVTPQAPCQPHQPAPHQQSKAQAEMQSSASSKDSSQSKIIRFTLGQKKISRLPGPTARVSAAGSEAKTRGGSTTANNRRSQSFNNYDKSKPVTSPPPPPSSHEKEPLASSASSHPGMSDNAPASLESGSSSTPTNCSTSSAIPQPGAATKPWRSKSLSVKHSATVSMLSVKPPGPEAPRPTPEAMKPAPNNQKSMLEKLKLFNSKGGSKAGEGPGSRDTSCERLETLPSFEESEELEAASRMLTTVGPASSSPKIALKGIAQRTFSRALTNKKSSLKGNEKEKEKQQREKDKEKSKDLAKRASVTERLDLKEEPKEDPSGAAVPEMPKKSSKIASFIPKGGKLNSAKKEPMAPSHSGIPKPGMKSMPGKSPSAPAPSKEGERSRSGKLSSGLPQQKPQLDGRHSSSSSSLASSEGKGPGGTTLNHSISSQTVSGSVGTTQTTGSNTVSVQLPQPQQQYNHPNTATVAPFLYRSQTDTEGNVTAESSSTGVSVEPSHFTKTGQPALEELTGEDPEARRLRTVKNIADLRQNLEETMSSLRGTQVTHSTLETTFDTNVTTEMSGRSILSLTGRPTPLSWRLGQSSPRLQAGDAPSMGNGYPPRANASRFINTESGRYVYSAPLRRQLASRGSSVCHVDVSDKAGDEMDLEGISMDAPGYMSDGDVLSKNIRTDDITSGYMTDGGLGLYTRRLNRLPDGMAVVRETLQRNTSLGLGDADSWDDSSSVSSGISDTIDNLSTDDINTSSSISSYANTPASSRKNLDVQTDAEKHSQVERNSLWSGDDVKKSDGGSDSGIKMEPGSKWRRNPSDVSDESDKSTSGKKNPVISQTGSWRRGMTAQVGITMPRTKPSAPAGALKTPGTGKTDDAKVSEKGRLSPKASQVKRSPSDAGRSSGDESKKPLPSSSRTPTANANSFGFKKQSGSAAGLAMITASGVTVTSRSATLGKIPKSSALVSRSAGRKSSMDGAQNQDDGYLALSSRTNLQYRSLPRPSKSNSRNGAGNRSSTSSIDSNISSKSAGLPVPKLREPSKTALGSSLPGLVNQTDKEKGISSDNESVASCNSVKVNPAAQPVSSPAQTSLQPGAKYPDVASPTLRRLFGGKPTKQVPIATAENMKNSVVISNPHATMTQQGNLDSPSGSGVLSSGSSSPLYSKNVDLNQSPLASSPSSAHSAPSNSLTWGTNASSSSAVSKDGLGFQSVSSLHTSCESIDISLSSGGVPSHNSSTGLIASSKDDSLTPFVRTNSVKTTLSESPLSSPAASPKFCRSTLPRKQDSDPHLDRNTLPKKGLRYTPTSQLRTQEDAKEWLRSHSAGGLQDTAANSPFSSGSSVTSPSGTRFNFSQLASPTTVTQMSLSNPTMLRTHSLSNADGQYDPYTDSRFRNSSMSLDEKSRTMSRSGSFRDGFEEESWEKSSVDNFVSRLHSSLHFSLPLFHHARYELVHGSSLSLVSSTSSVYSTPEEKCQSEIRKLRRELDASQEKVSALTTQLTANAHLVAAFEQSLGNMTIRLQSLTMTAEQKDSELNELRKTIELLKKQNAAAQAAINGVINTPELNCKGNGTAQSADLRIRRQHSSDSVSSINSATSHSSVGSNIESDSKKKKRKNWVNELRSSFKQAFGKKKSPKSASSHSDIEEMTDSSLPSSPKLPHNGSTGSTPLLRNSHSNSLISECMDSEAETVMQLRNELRDKEMKLTDIRLEALSSAHQLDQLREAMNRMQSEIEKLKAENDRLKSESQGSGCSRAPSQVSISASPRQSMGLSQHSLNLTESTSLDMLLDDTGECSARKEGGRHVKIVVSFQEEMKWKEDSRPHLFLIGCIGVSGKTKWDVLDGVVRRLFKEYIIHVDPVSQLGLNSDSVLGYSIGEIKRSNTSETPELLPCGYLVGENTTISVTVKGLAENSLDSLVFESLIPKPILQRYVSLLIEHRRIILSGPSGTGKTYLANRLSEYIVLREGRELTDGVIATFNVDHKSSKELRQYLSNLADQCNSENNAVDMPLVIILDNLHHVSSLGEIFNGLLNCKYHKCPYIIGTMNQATSSTPNLQLHHNFRWVLCANHTEPVKGFLGRFLRRKLMETEISGRVRNMELVKIIDWIPKVWHHLNRFLEAHSSSDVTIGPRLFLSCPIDVDGSRVWFTDLWNYSIIPYLLEAVREGLQLYGRRAPWEDPAKWVMDTYPWAASPQQHEWPPLLQLRPEDVGFDGYSMPREGSTSKQMPPSDAEGDPLMNMLMRLQEAANYSSPQSYDSDSNSNSHHDDILDSSLESTL.

The Calponin-homology (CH) domain occupies 85–192 (GFDTQIYTDW…LFFSLSRYKQ (108 aa)). Low complexity-rich tracts occupy residues 194–204 (QQQPQKQHLSS), 221–247 (QAGT…PHQQ), and 255–267 (QSSA…SQSK). Disordered regions lie at residues 194-675 (QQQP…GSNT) and 706-727 (TEGN…SHFT). Residues 299-315 (GGSTTANNRRSQSFNNY) show a composition bias toward polar residues. The segment covering 356 to 369 (SGSSSTPTNCSTSS) has biased composition (low complexity). The span at 384-396 (KSLSVKHSATVSM) shows a compositional bias: polar residues. A compositionally biased stretch (pro residues) spans 401-410 (PPGPEAPRPT). A compositionally biased stretch (polar residues) spans 492-506 (RTFSRALTNKKSSLK). Positions 498-531 (LTNKKSSLKGNEKEKEKQQREKDKEKSKDLAKRA) form a coiled coil. Positions 507 to 547 (GNEKEKEKQQREKDKEKSKDLAKRASVTERLDLKEEPKEDP) are enriched in basic and acidic residues. A compositionally biased stretch (low complexity) spans 592 to 606 (MKSMPGKSPSAPAPS). A compositionally biased stretch (polar residues) spans 615–626 (GKLSSGLPQQKP). Low complexity-rich tracts occupy residues 633-642 (SSSSSSLASS) and 657-675 (SSQT…GSNT). Polar residues predominate over residues 706–719 (TEGNVTAESSSTGV). A coiled-coil region spans residues 743-771 (EARRLRTVKNIADLRQNLEETMSSLRGTQ). Disordered stretches follow at residues 804–824 (LSWR…PSMG), 939–1151 (LGLG…QSGS), 1177–1200 (KSSA…NQDD), 1213–1283 (YRSL…SDNE), 1295–1338 (PAAQ…PIAT), 1355–1412 (MTQQ…TNAS), 1440–1460 (SLSS…ASSK), 1473–1560 (VKTT…VTSP), and 1591–1629 (SLSN…SFRD). The span at 939-985 (LGLGDADSWDDSSSVSSGISDTIDNLSTDDINTSSSISSYANTPASS) shows a compositional bias: low complexity. Residues 1091-1102 (KTDDAKVSEKGR) show a composition bias toward basic and acidic residues. Over residues 1130–1142 (PSSSRTPTANANS) the composition is skewed to polar residues. Residues 1220–1245 (SKSNSRNGAGNRSSTSSIDSNISSKS) are compositionally biased toward low complexity. Residues 1299–1309 (PVSSPAQTSLQ) show a composition bias toward polar residues. 2 stretches are compositionally biased toward low complexity: residues 1363-1380 (SPSG…PLYS) and 1388-1404 (SPLA…PSNS). Residues 1440-1456 (SLSSGGVPSHNSSTGLI) show a composition bias toward polar residues. The segment covering 1477-1489 (LSESPLSSPAASP) has biased composition (low complexity). S1480, S1484, and S1488 each carry phosphoserine. Composition is skewed to basic and acidic residues over residues 1498-1510 (RKQD…DRNT) and 1526-1535 (TQEDAKEWLR). Positions 1549 to 1560 (SPFSSGSSVTSP) are enriched in low complexity. The stretch at 1686–1773 (EEKCQSEIRK…AAAQAAINGV (88 aa)) forms a coiled coil. Disordered stretches follow at residues 1790-1887 (ADLR…LRNS) and 1951-1985 (AEND…MGLS). Polar residues-rich tracts occupy residues 1800-1820 (SDSV…SNIE), 1875-1887 (NGST…LRNS), and 1959-1985 (ESQG…MGLS). The stretch at 1897-1964 (MDSEAETVMQ…RLKSESQGSG (68 aa)) forms a coiled coil. S1977 carries the post-translational modification Phosphoserine. ATP is bound at residue 2157-2164 (GPSGTGKT). The segment at 2423-2488 (DGYSMPREGS…ILDSSLESTL (66 aa)) is disordered. The span at 2460 to 2473 (YSSPQSYDSDSNSN) shows a compositional bias: low complexity.

The protein belongs to the Nav/unc-53 family. Highly expressed in the brain, kidney and liver. Also expressed in the thyroid, mammary gland, spinal cord, heart, placenta and lung. Abundantly expressed in colon cancers.

The protein localises to the nucleus. The catalysed reaction is ATP + H2O = ADP + phosphate + H(+). Its function is as follows. Possesses 3' to 5' helicase activity and exonuclease activity. Involved in neuronal development, specifically in the development of different sensory organs. The chain is Neuron navigator 2 (NAV2) from Homo sapiens (Human).